The sequence spans 138 residues: MVIPHIICLPMALHLWTCRFLSLGRPATNRRNCRRLRRRAVHRQATRPTRRIHHSAPQSFPQGLFNCAFVLLRRHALCRRLVGISTHVRAFKNCSKSDGPRRHKRTGQNSRVCPCGSWIYRIVSDRSGAFKCARRRVL.

The N-terminal stretch at 1 to 18 (MVIPHIICLPMALHLWTC) is a signal peptide. Residues 34–37 (RRLR) carry the RxLR motif. Asparagine 93 carries N-linked (GlcNAc...) asparagine glycosylation.

Belongs to the RxLR effector family.

It localises to the secreted. The protein localises to the host nucleus. Functionally, secreted effector that completely suppresses the host cell death induced by cell death-inducing proteins. This Plasmopara viticola (Downy mildew of grapevine) protein is Secreted RxLR effector protein 91.